The primary structure comprises 1088 residues: DNA damage-binding protein 1a (1088 aa).

The protein belongs to the DDB1 family. As to quaternary structure, component of the CDD complex, at least composed of COP10, DET1 and DDB1A. Component of the CUL4-RBX1-CDD complex. Component of the CUL4-RBX1-DDB1-PRL1 E3 ubiquitin-protein ligase complex. Component of the UV-DDB complex, which is composed of DDB1A and DDB2. Interacts with RAE1. Interacts with WDR55. Interacts with ATCSA-1. Interacts with DDA1. Binds to ASG2; the subcellular localization of this complex depends on ASG2 farnesylation status. Binds to KTN80.2/DWA3. Interacts with HTD1. Interacts directly with DHU1.

The protein resides in the cytoplasm. It localises to the nucleus. Its pathway is protein modification; protein ubiquitination. Its function is as follows. Component of light signal transduction machinery. Involved in repression of photomorphogenesis in darkness by participating in the CDD complex, a complex probably required to regulate the activity of ubiquitin conjugating enzymes (E2s). Repression of photomorphogenesis is probably mediated by ubiquitination and subsequent degradation of photomorphogenesis-promoting factors such as HY5, HYH and LAF1. Plays a role in DNA repair by forming with DDB2 the UV-damaged DNA-binding protein complex (UV-DDB). Component of the CUL4-RBX1-DDB1-PRL1 E3 ubiquitin-protein ligase complex. This is DNA damage-binding protein 1a from Arabidopsis thaliana (Mouse-ear cress).